The sequence spans 322 residues: Thioredoxin reductase (322 aa).

FAD-binding positions include 11 to 14 (SGPA), 40 to 41 (IA), Gln45, Asn54, Val87, and Cys145. Cys142 and Cys145 are oxidised to a cystine. Ser192 bears the Phosphoserine mark. Position 278 is a phosphothreonine (Thr278). A Phosphoserine modification is found at Ser279. FAD-binding positions include Asp288 and 295–297 (RQA).

It belongs to the class-II pyridine nucleotide-disulfide oxidoreductase family. In terms of assembly, homodimer. FAD serves as cofactor.

It is found in the cytoplasm. The catalysed reaction is [thioredoxin]-dithiol + NADP(+) = [thioredoxin]-disulfide + NADPH + H(+). This chain is Thioredoxin reductase (trr1), found in Schizosaccharomyces pombe (strain 972 / ATCC 24843) (Fission yeast).